The following is a 7081-amino-acid chain: Leucine-rich repeat transmembrane protein CCDC168 (7081 aa).

The chain crosses the membrane as a helical span at residues 37–57 (WVAIFFIILLGIIFEIILMKA). LRR repeat units follow at residues 233-256 (PCPL…VRNQ) and 420-445 (NAEF…SVKA). The segment at 717–745 (EDLQSSENSHLQLSNGEELPTSTPKTQRC) is disordered. The span at 718-742 (DLQSSENSHLQLSNGEELPTSTPKT) shows a compositional bias: polar residues. Residues 865–890 (ADTLRIIRLSHSASKQEKLPDEKETQ) form an LRR 3 repeat. The interval 943–1009 (QISSGSSKAP…DPKNPLTMPE (67 aa)) is disordered. Over residues 958-970 (VQPQTLSTQTILE) the composition is skewed to polar residues. Residues 981–999 (QVEKVKQSTDRPTDRESAG) show a composition bias toward basic and acidic residues. One copy of the LRR 4 repeat lies at 1050–1075 (LPAVALGSFNNHLLTLPYFKRQEIKK). 2 stretches are compositionally biased toward polar residues: residues 1274–1286 (KCTA…SPIS) and 1295–1304 (LNQTRESYIP). Positions 1274–1304 (KCTADSETPSPISGKSLIGDPLNQTRESYIP) are disordered. An LRR 5 repeat occupies 1501–1527 (NCLTLELHINGQRLQHQTGFEQTTLET). Basic and acidic residues-rich tracts occupy residues 1773–1784 (ETEKDTLREKRL) and 1793–1804 (TSPHEDSITSRD). Disordered stretches follow at residues 1773–1804 (ETEK…TSRD), 1954–1973 (KSPH…ESGS), 2008–2031 (STHQ…EGRS), and 2083–2103 (TGKS…NPRR). Positions 1964–1973 (ANLTDMESGS) are enriched in polar residues. The LRR 6 repeat unit spans residues 2373 to 2397 (KNQINTIQLSERKIILNPKCLTMKE). Residues 2637 to 2680 (GRHSPASEEMKRQNGRLKMADRSSPQGRPLQAKQSAVSQSPDTA) are disordered. Polar residues predominate over residues 2668-2678 (AKQSAVSQSPD). 5 LRR repeats span residues 2727 to 2749 (SKIH…KTRA), 2832 to 2855 (IQQQ…VYDS), 2862 to 2889 (IKKL…KLEK), 3433 to 3458 (LSSR…RLEW), and 3630 to 3653 (ILSL…NVKS). The tract at residues 3730-3756 (SLSHSNSNSRTKAGKDKSGTLKGCLPP) is disordered. Residues 3875-3898 (MRGITRFCLSSSTQQELSDTMEKC) form an LRR 12 repeat. Disordered stretches follow at residues 4119 to 4260 (ELSH…DGDK), 4293 to 4428 (QGII…KQET), 4729 to 4756 (QESL…LLPQ), 4794 to 4817 (SPLS…QDRT), 4831 to 4859 (MPSL…RLAN), 4928 to 4955 (GVQE…YLNC), 4966 to 4985 (LGKT…SDSG), and 5191 to 5212 (QKVK…SPLH). 6 stretches are compositionally biased toward basic and acidic residues: residues 4121 to 4133 (SHQK…EKAD), 4147 to 4176 (KAKD…DKGL), 4192 to 4245 (EPGK…EQQK), 4329 to 4361 (QKAK…DLKG), 4375 to 4401 (EPGK…NRDG), and 4415 to 4426 (EQEKRDGHKSKQ). A compositionally biased stretch (polar residues) spans 4731 to 4743 (SLPSRQTAPTKPT). Basic and acidic residues-rich tracts occupy residues 4746-4756 (LVKKEKQLLPQ) and 4798-4817 (KRKE…QDRT). Polar residues predominate over residues 5203–5212 (KSPSRSSPLH). Residues 5311–5336 (LSQLELDKETHLGNEMLRLKRPILRR) form an LRR 13 repeat. The interval 5467 to 5496 (LPDTEKTADAEARSGDVRKGKPHRSQKENR) is disordered. Positions 5469 to 5496 (DTEKTADAEARSGDVRKGKPHRSQKENR) are enriched in basic and acidic residues. The stretch at 5522–5545 (LNAKELVLNINKLEKKVHKDKDEA) is one LRR 14 repeat. Disordered stretches follow at residues 5564-5583 (LDSG…SSCP) and 5763-5792 (QQET…SNDR). Positions 5779 to 5792 (KFDKPKEDGQSNDR) are enriched in basic and acidic residues. LRR repeat units lie at residues 5901–5924 (KQAL…LFPP), 6259–6282 (PDLR…ECPS), 6419–6442 (HLES…SLQM), 6552–6575 (HFSV…SYAM), and 6613–6637 (QIDL…TFPK). Disordered stretches follow at residues 6859–6878 (CKSH…SPDW) and 6916–6950 (APLT…RSDL). Residues 6860–6871 (KSHKSRKYRSSS) are compositionally biased toward basic residues. The segment covering 6937–6950 (HPESQERKKARSDL) has biased composition (basic and acidic residues). An LRR 20 repeat occupies 7012–7036 (NRPFFFACVPADSLEVIPKTIRWTI).

It localises to the membrane. The polypeptide is Leucine-rich repeat transmembrane protein CCDC168 (Homo sapiens (Human)).